The following is a 608-amino-acid chain: Microtubule-associated protein 70-3 (608 aa).

Residues 1–23 (MADGVEEGNAVAPRGPARRRGTV) form a disordered region. A coiled-coil region spans residues 40–346 (DPVRVELTRL…ARSEAQLKEK (307 aa)). The required for targeting to microtubules stretch occupies residues 224–458 (ILDKLQRQKV…HLLNRSTDAV (235 aa)). Disordered stretches follow at residues 354-493 (LEDG…TANN) and 570-608 (DKEQ…RNYQ). The segment covering 363–379 (SGSSRLPTEGKSFSNGP) has biased composition (polar residues). A compositionally biased stretch (low complexity) spans 402–421 (RRSPSFHSRSSLSSSSSLVL). Residues 476–493 (IENTNSNTDESNKETANN) show a composition bias toward polar residues. Residues 542 to 576 (LTKAMEVEAKKMRREVAAMEKEVAAMRVDKEQEVK) are a coiled coil. The span at 586–608 (TGSSQVLSGSRSSSRSGLTRNYQ) shows a compositional bias: low complexity.

It belongs to the MAP70 family.

The protein localises to the cytoplasm. It is found in the cytoskeleton. Its function is as follows. Plant-specific protein that interact with microtubules. This Oryza sativa subsp. japonica (Rice) protein is Microtubule-associated protein 70-3 (MAP70.3).